The sequence spans 384 residues: Putative sarcosine oxidase (384 aa).

6–36 (DVVVVGAGIFGSCTAYNCQKIGLKTLLLEQF) lines the FAD pocket. S-8alpha-FAD cysteine is present on cysteine 315.

It belongs to the MSOX/MTOX family. The cofactor is FAD.

The enzyme catalyses sarcosine + O2 + H2O = formaldehyde + glycine + H2O2. The chain is Putative sarcosine oxidase from Caenorhabditis elegans.